A 316-amino-acid chain; its full sequence is Ribosomal RNA small subunit methyltransferase H (316 aa).

Residues glycine 35–histidine 37, aspartate 55, phenylalanine 79, aspartate 101, and glutamine 108 contribute to the S-adenosyl-L-methionine site.

The protein belongs to the methyltransferase superfamily. RsmH family.

It localises to the cytoplasm. The enzyme catalyses cytidine(1402) in 16S rRNA + S-adenosyl-L-methionine = N(4)-methylcytidine(1402) in 16S rRNA + S-adenosyl-L-homocysteine + H(+). Its function is as follows. Specifically methylates the N4 position of cytidine in position 1402 (C1402) of 16S rRNA. The polypeptide is Ribosomal RNA small subunit methyltransferase H (Aliivibrio salmonicida (strain LFI1238) (Vibrio salmonicida (strain LFI1238))).